The chain runs to 44 residues: Antimicrobial peptide 2 (44 aa).

Disulfide bonds. As to expression, expressed in flowers but not in leaves, seeds or roots (at protein level).

Functionally, antimicrobial peptide. Active against fungal species B.cinerea (IC(50)=5.2 uM), A.niger (IC(50)=2.6 uM) and B.sorokinina (IC(50)=5.2 uM) but not against F.oxysporum, F.graminearum and P.debaryanum at concentrations below 10 uM. Inhibits growth of P.infestans at concentration between 1.3 uM and 5.2 uM. Active against bacterial species P.syringae, B.subtilis, X.campestris and C.michiganense. The polypeptide is Antimicrobial peptide 2 (Taraxacum officinale (Common dandelion)).